A 226-amino-acid chain; its full sequence is 7-cyano-7-deazaguanine synthase (226 aa).

7–17 (LSGGMDSLVTT) is an ATP binding site. Residues cysteine 187, cysteine 195, cysteine 198, and cysteine 201 each coordinate Zn(2+).

Belongs to the QueC family. Zn(2+) serves as cofactor.

It catalyses the reaction 7-carboxy-7-deazaguanine + NH4(+) + ATP = 7-cyano-7-deazaguanine + ADP + phosphate + H2O + H(+). It functions in the pathway purine metabolism; 7-cyano-7-deazaguanine biosynthesis. Catalyzes the ATP-dependent conversion of 7-carboxy-7-deazaguanine (CDG) to 7-cyano-7-deazaguanine (preQ(0)). The chain is 7-cyano-7-deazaguanine synthase from Chloroherpeton thalassium (strain ATCC 35110 / GB-78).